The chain runs to 202 residues: MKVVAFERQEQGTGASRRLRNAGKTTGIVYGGEAAPQKIELDHNALWHALKKEAFHSSILDLEVAGQSQQVLLRDVQYHPFKQLVLHVDFQRVDAKKKLHTKVPLHFLNAEVSPAVKLSSAVVSHVATEIEIECLPSALPEFLEVDLSKIEAGQSLHAKDIALPKGVALVAHIDAENPVVASATIPAGAVSDAAGEGETPAA.

This sequence belongs to the bacterial ribosomal protein bL25 family. CTC subfamily. In terms of assembly, part of the 50S ribosomal subunit; part of the 5S rRNA/L5/L18/L25 subcomplex. Contacts the 5S rRNA. Binds to the 5S rRNA independently of L5 and L18.

In terms of biological role, this is one of the proteins that binds to the 5S RNA in the ribosome where it forms part of the central protuberance. The sequence is that of Large ribosomal subunit protein bL25 from Burkholderia ambifaria (strain MC40-6).